The following is a 207-amino-acid chain: Large ribosomal subunit protein uL4 (207 aa).

The segment at 56–75 (EVSGTTKKPFKQKGTGNARQ) is disordered.

This sequence belongs to the universal ribosomal protein uL4 family. In terms of assembly, part of the 50S ribosomal subunit.

Functionally, one of the primary rRNA binding proteins, this protein initially binds near the 5'-end of the 23S rRNA. It is important during the early stages of 50S assembly. It makes multiple contacts with different domains of the 23S rRNA in the assembled 50S subunit and ribosome. Forms part of the polypeptide exit tunnel. This Rickettsia prowazekii (strain Madrid E) protein is Large ribosomal subunit protein uL4.